A 187-amino-acid polypeptide reads, in one-letter code: Dirigent protein 6 (187 aa).

The first 29 residues, 1-29 (MAFLVEKQLFKALFSFFLLVLLFSDTVLS), serve as a signal peptide directing secretion. The cysteines at positions 40 and 186 are disulfide-linked. N-linked (GlcNAc...) asparagine glycans are attached at residues Asn59 and Asn123.

Belongs to the plant dirigent protein family. Homodimer. As to expression, expressed in roots, cotyledon veins, leaf trichomes, flowers, siliques, and meristems. Present in interfascicular/vascular cambia and developing xylem.

Its subcellular location is the secreted. It localises to the extracellular space. The protein localises to the apoplast. Functionally, dirigent proteins impart stereoselectivity on the phenoxy radical-coupling reaction, yielding optically active lignans from two molecules of coniferyl alcohol in the biosynthesis of lignans, flavonolignans, and alkaloids and thus plays a central role in plant secondary metabolism. Enantiocomplementary dirigent protein that mediates the laccase-catalyzed enantioselective oxidative phenol coupling of (E)-coniferyl alcohol to (-)-pinoresinol. In Arabidopsis thaliana (Mouse-ear cress), this protein is Dirigent protein 6 (DIR6).